Reading from the N-terminus, the 194-residue chain is Peptidyl-tRNA hydrolase (194 aa).

Tyr-17 is a tRNA binding site. The active-site Proton acceptor is the His-22. Residues Phe-68, Asn-70, and Asn-116 each contribute to the tRNA site.

The protein belongs to the PTH family. Monomer.

The protein localises to the cytoplasm. It carries out the reaction an N-acyl-L-alpha-aminoacyl-tRNA + H2O = an N-acyl-L-amino acid + a tRNA + H(+). Its function is as follows. Hydrolyzes ribosome-free peptidyl-tRNAs (with 1 or more amino acids incorporated), which drop off the ribosome during protein synthesis, or as a result of ribosome stalling. In terms of biological role, catalyzes the release of premature peptidyl moieties from peptidyl-tRNA molecules trapped in stalled 50S ribosomal subunits, and thus maintains levels of free tRNAs and 50S ribosomes. This Haemophilus influenzae (strain PittGG) protein is Peptidyl-tRNA hydrolase.